The sequence spans 173 residues: Small ribosomal subunit protein uS9 (173 aa).

Residues 20 to 53 (SYTTESEVPVEGEYTSESVASRFGEPQPAAGLGR) form a disordered region.

The protein belongs to the universal ribosomal protein uS9 family.

The chain is Small ribosomal subunit protein uS9 from Streptomyces avermitilis (strain ATCC 31267 / DSM 46492 / JCM 5070 / NBRC 14893 / NCIMB 12804 / NRRL 8165 / MA-4680).